We begin with the raw amino-acid sequence, 304 residues long: Voltage-dependent anion channel-forming protein YneE (304 aa).

4 helical membrane-spanning segments follow: residues 28 to 48, 50 to 70, 194 to 214, and 220 to 240; these read LLLN…YTHL, IKFT…FLGF, VLAG…TLIL, and LFCI…TPFI.

It belongs to the anion channel-forming bestrophin (TC 1.A.46) family.

Its subcellular location is the cell membrane. This Escherichia coli (strain K12) protein is Voltage-dependent anion channel-forming protein YneE (yneE).